The primary structure comprises 434 residues: Alpha-enolase (434 aa).

The residue at position 2 (Ser2) is an N-acetylserine. Ser40 is a Mg(2+) binding site. Tyr44 bears the Phosphotyrosine mark. N6-acetyllysine; alternate is present on Lys60. The residue at position 60 (Lys60) is an N6-succinyllysine; alternate. Lys71 is modified (N6-acetyllysine). Lys89 carries the N6-acetyllysine; alternate modification. The residue at position 89 (Lys89) is an N6-succinyllysine; alternate. N6-acetyllysine is present on residues Lys92 and Lys126. His158 and Glu167 together coordinate substrate. N6-acetyllysine is present on residues Lys193 and Lys199. The residue at position 202 (Lys202) is an N6-acetyllysine; alternate. Residue Lys202 forms a Glycyl lysine isopeptide (Lys-Gly) (interchain with G-Cter in SUMO2); alternate linkage. Residue Glu210 is the Proton donor of the active site. Residues Lys228 and Lys233 each carry the N6-acetyllysine; alternate modification. Lys228 carries the N6-succinyllysine; alternate modification. Lys228 carries the N6-(2-hydroxyisobutyryl)lysine; alternate modification. Lys233 is modified (N6-malonyllysine; alternate). Residue Asp245 participates in Mg(2+) binding. Ser254 carries the phosphoserine modification. Position 256 is an N6-acetyllysine (Lys256). Position 263 is a phosphoserine (Ser263). Lys281 bears the N6-acetyllysine; alternate mark. Residue Lys281 is modified to N6-(2-hydroxyisobutyryl)lysine; alternate. Phosphotyrosine is present on Tyr287. Ser291 is modified (phosphoserine). 2 residues coordinate Mg(2+): Glu293 and Asp318. 2 residues coordinate substrate: Glu293 and Asp318. An N6-acetyllysine mark is found at Lys335 and Lys343. Lys343 acts as the Proton acceptor in catalysis. Substrate contacts are provided by residues 370–373 and Lys394; that span reads SHRS. The interval 405–434 is required for interaction with PLG; that stretch reads AKYNQILRIEEELGSKAKFAGRSFRNPLAK. Lys406 carries the N6-acetyllysine modification. The residue at position 420 (Lys420) is an N6-acetyllysine; alternate. Lys420 carries the post-translational modification N6-succinyllysine; alternate. Lys420 carries the N6-malonyllysine; alternate modification.

Belongs to the enolase family. As to quaternary structure, mammalian enolase is composed of 3 isozyme subunits, alpha, beta and gamma, which can form homodimers or heterodimers which are cell-type and development-specific. ENO1 interacts with PLG in the neuronal plasma membrane and promotes its activation. The C-terminal lysine is required for this binding. In vitro, interacts with several glycolytic enzymes including PKM, PGM, CKM and aldolase. Also binds troponin, in vitro. Interacts with ENO4 and PGAM2. Interacts with CMTM6. The cofactor is Mg(2+). ISGylated. In terms of processing, lysine 2-hydroxyisobutyrylation (Khib) by p300/EP300 activates the phosphopyruvate hydratase activity. In terms of tissue distribution, testis. Found in the principal piece of sperm tail (at protein level). The alpha/alpha homodimer is expressed in embryo and in most adult tissues. The alpha/beta heterodimer and the beta/beta homodimer are found in striated muscle, and the alpha/gamma heterodimer and the gamma/gamma homodimer in neurons. In striated muscle, expression of ENO1 appears to be independent of fiber type.

The protein localises to the cytoplasm. The protein resides in the cell membrane. The enzyme catalyses (2R)-2-phosphoglycerate = phosphoenolpyruvate + H2O. Its pathway is carbohydrate degradation; glycolysis; pyruvate from D-glyceraldehyde 3-phosphate: step 4/5. In terms of biological role, glycolytic enzyme the catalyzes the conversion of 2-phosphoglycerate to phosphoenolpyruvate. In addition to glycolysis, involved in various processes such as growth control, hypoxia tolerance and allergic responses. May also function in the intravascular and pericellular fibrinolytic system due to its ability to serve as a receptor and activator of plasminogen on the cell surface of several cell-types such as leukocytes and neurons. Stimulates immunoglobulin production. This Mus musculus (Mouse) protein is Alpha-enolase (Eno1).